Here is a 166-residue protein sequence, read N- to C-terminus: Ribosome maturation factor RimM (166 aa).

The PRC barrel domain occupies 94–166; it reads EGEYYLGKLI…IELKVLDLLK (73 aa).

The protein belongs to the RimM family. As to quaternary structure, binds ribosomal protein uS19.

The protein resides in the cytoplasm. In terms of biological role, an accessory protein needed during the final step in the assembly of 30S ribosomal subunit, possibly for assembly of the head region. Essential for efficient processing of 16S rRNA. May be needed both before and after RbfA during the maturation of 16S rRNA. It has affinity for free ribosomal 30S subunits but not for 70S ribosomes. In Borreliella burgdorferi (strain ATCC 35210 / DSM 4680 / CIP 102532 / B31) (Borrelia burgdorferi), this protein is Ribosome maturation factor RimM.